The sequence spans 307 residues: Cyclooctat-9-en-7-ol synthase (307 aa).

Mg(2+)-binding residues include D110, N220, S224, and E228. The DDXXD motif; degenerate signature appears at 110–113 (DDMD). An NSE/DTE motif motif is present at residues 220–228 (NDFYSYDRE).

It belongs to the terpene synthase family. As to quaternary structure, homodimer. It depends on Mg(2+) as a cofactor.

The enzyme catalyses geranylgeranyl diphosphate + H2O = cyclooctat-9-en-7-ol + diphosphate. Catalyzes the cyclization of the linear isoprenoid intermediate geranylgeranyl diphosphate to tricycclic cyclooctat-9-en-7-ol in the cyclooctatin biosynthesis pathway. Cyclooctatin is a potent inhibitor of lysophospholipase. This chain is Cyclooctat-9-en-7-ol synthase, found in Streptomyces melanosporofaciens.